A 586-amino-acid chain; its full sequence is ATP-dependent RNA helicase HAS1 (586 aa).

Positions 1 to 107 (MASDLSKKRK…GDGSLLGPSV (107 aa)) are disordered. The span at 39–60 (EDSDAERDNSSDPEIENQEPEV) shows a compositional bias: acidic residues. The Q motif motif lies at 112-140 (QAFSELNLSDKTMMSINEMGFTKMTEIQR). Positions 143-318 (IPPLLAGKDV…RISLRPGPLY (176 aa)) constitute a Helicase ATP-binding domain. Residue 156 to 163 (AKTGSGKT) coordinates ATP. The short motif at 265-268 (DEAD) is the DEAD box element. Positions 332 to 502 (GLDQGYVIVD…NVQSQLEKLI (171 aa)) constitute a Helicase C-terminal domain. A disordered region spans residues 557–586 (TLGAGMSRDKKPQARRAYGSQPRQSGHQRR). Positions 577 to 586 (QPRQSGHQRR) are enriched in polar residues.

Belongs to the DEAD box helicase family. DDX18/HAS1 subfamily. In terms of assembly, associates in the nucleolus with the 60S and pre-60S ribosomal subunits.

The protein resides in the nucleus. Its subcellular location is the nucleolus. The catalysed reaction is ATP + H2O = ADP + phosphate + H(+). Functionally, ATP-dependent RNA helicase involved in 40S ribosomal subunit biogenesis. Required for the processing and cleavage of 35S pre-rRNA at sites A0, A1, and A2, leading to mature 18S rRNA. This chain is ATP-dependent RNA helicase HAS1 (HAS1), found in Chaetomium globosum (strain ATCC 6205 / CBS 148.51 / DSM 1962 / NBRC 6347 / NRRL 1970) (Soil fungus).